A 73-amino-acid polypeptide reads, in one-letter code: Putative defensin-like protein 57 (73 aa).

A signal peptide spans methionine 1–alanine 25. 4 disulfides stabilise this stretch: cysteine 37–cysteine 71, cysteine 41–cysteine 64, cysteine 50–cysteine 69, and cysteine 54–cysteine 70.

Belongs to the DEFL family.

The protein resides in the secreted. This Arabidopsis thaliana (Mouse-ear cress) protein is Putative defensin-like protein 57.